The sequence spans 397 residues: Chorismate synthase (397 aa).

The NADP(+) site is built by R40 and R46. Residues 129–131, 257–258, G302, 317–321, and R343 contribute to the FMN site; these read RAS, QA, and KPIAT.

This sequence belongs to the chorismate synthase family. As to quaternary structure, homotetramer. FMNH2 serves as cofactor.

The enzyme catalyses 5-O-(1-carboxyvinyl)-3-phosphoshikimate = chorismate + phosphate. Its pathway is metabolic intermediate biosynthesis; chorismate biosynthesis; chorismate from D-erythrose 4-phosphate and phosphoenolpyruvate: step 7/7. Its function is as follows. Catalyzes the anti-1,4-elimination of the C-3 phosphate and the C-6 proR hydrogen from 5-enolpyruvylshikimate-3-phosphate (EPSP) to yield chorismate, which is the branch point compound that serves as the starting substrate for the three terminal pathways of aromatic amino acid biosynthesis. This reaction introduces a second double bond into the aromatic ring system. In Prosthecochloris aestuarii (strain DSM 271 / SK 413), this protein is Chorismate synthase.